The following is a 148-amino-acid chain: Large ribosomal subunit protein bL9 (148 aa).

The protein belongs to the bacterial ribosomal protein bL9 family.

Binds to the 23S rRNA. The protein is Large ribosomal subunit protein bL9 of Bifidobacterium animalis subsp. lactis (strain AD011).